A 209-amino-acid chain; its full sequence is MKAVVQRVTRASVTVGGEQISAIGRGICVLLGISLEDTQKELEHMVRKILNLRVFEDESGKHWSKSVMDKQYEILCVSQFTLQCVLKGNKPDFHLAMPTEQAEGFYNSFLEQLRKTYRPELIKDGKFGAYMQVHIQNDGPVTIELESPAPGTATSDPKQLSKLEKQQQRKEKTRAKGPSESSKERNTPRKEDRSASSGAEGDVSSEREP.

Positions 4, 6, and 28 each coordinate Mg(2+). The Gly-cisPro motif, important for rejection of L-amino acids motif lies at 139 to 140 (GP). The segment at 142–209 (TIELESPAPG…EGDVSSEREP (68 aa)) is disordered. 2 stretches are compositionally biased toward basic and acidic residues: residues 159-170 (QLSKLEKQQQRK) and 181-194 (SSKE…EDRS). Phosphoserine occurs at positions 197, 204, and 205.

It belongs to the DTD family. In terms of assembly, homodimer. Interacts with CDC45 and TOPBP1. In terms of processing, preferentially phosphorylated in cells arrested early in S phase. Phosphorylation in the C-terminus weakens the interaction with CDC45. Expressed in many adult and fetal tissues. Highest levels in testis, ovary, spleen and in adult and fetal brain.

The protein resides in the nucleus. Its subcellular location is the cytoplasm. The catalysed reaction is glycyl-tRNA(Ala) + H2O = tRNA(Ala) + glycine + H(+). The enzyme catalyses a D-aminoacyl-tRNA + H2O = a tRNA + a D-alpha-amino acid + H(+). Functionally, possible ATPase involved in DNA replication, may facilitate loading of CDC45 onto pre-replication complexes. An aminoacyl-tRNA editing enzyme that deacylates mischarged D-aminoacyl-tRNAs. Also deacylates mischarged glycyl-tRNA(Ala), protecting cells against glycine mischarging by AlaRS. Acts via tRNA-based rather than protein-based catalysis; rejects L-amino acids rather than detecting D-amino acids in the active site. By recycling D-aminoacyl-tRNA to D-amino acids and free tRNA molecules, this enzyme counteracts the toxicity associated with the formation of D-aminoacyl-tRNA entities in vivo and helps enforce protein L-homochirality. The sequence is that of D-aminoacyl-tRNA deacylase 1 (DTD1) from Homo sapiens (Human).